A 134-amino-acid polypeptide reads, in one-letter code: Interferon-induced transmembrane protein 5 (134 aa).

Positions 1 to 20 (MDTSYPREDPRAPSSRKADA) are enriched in basic and acidic residues. The disordered stretch occupies residues 1–31 (MDTSYPREDPRAPSSRKADAAAHTALSMGTP). Over 1-39 (MDTSYPREDPRAPSSRKADAAAHTALSMGTPGPTPRDHM) the chain is Extracellular. A helical transmembrane segment spans residues 40-60 (LWSVFSTMYLNLCCLGFLALV). 3 S-palmitoyl cysteine lipidation sites follow: Cys-52, Cys-53, and Cys-86. Residues 61–88 (HSVKARDQKMAGNLEAARQYGSKAKCYN) lie on the Cytoplasmic side of the membrane. The helical transmembrane segment at 89 to 109 (ILAAMWTLVPPLLLLGLVVTG) threads the bilayer. Topologically, residues 110 to 134 (ALHLSKLAKDSAAFFSTKFDEEDYN) are extracellular.

It belongs to the CD225/Dispanin family. Interacts with FKBP11. In terms of processing, palmitoylated. In terms of tissue distribution, detected in embryonic bone (at protein level). Highly expressed in osteoblasts of adults and embryos. Expressed in primitive hemopoietic cells.

It is found in the cell membrane. Its function is as follows. Required for normal bone mineralization. This is Interferon-induced transmembrane protein 5 (Ifitm5) from Mus musculus (Mouse).